A 126-amino-acid chain; its full sequence is MLTDPIADMLTRIRNAHLALHKEVNVPRSRMKESLAAILKQEGYVEDVAVADSNITITLKYLKGKPVISGLKRISTPGRRVYVGAHKIPRVQNGLGICILSTSSGVLDGMTAHEKKVGGELLCEIW.

It belongs to the universal ribosomal protein uS8 family. As to quaternary structure, part of the 30S ribosomal subunit. Contacts proteins S5 and S12.

In terms of biological role, one of the primary rRNA binding proteins, it binds directly to 16S rRNA central domain where it helps coordinate assembly of the platform of the 30S subunit. In Desulfovibrio desulfuricans (strain ATCC 27774 / DSM 6949 / MB), this protein is Small ribosomal subunit protein uS8.